The chain runs to 186 residues: MGWISGFRLRLAANALRNGRIVAYPTEAVYGLGCDPFNEDAVRKLLALKRRSQIKGLILIAADVEAVESLVDLARVPLGAEVRAGWPGPTTWLIPPRPGIPDWLRGAHDSLAVRVTAHPVAAALCRVFGGAIVSTSANLSGHRPARTPVRLWRQFPRRAIHFLPGRLGGAVRPTAIFDAMSGRRIR.

One can recognise a YrdC-like domain in the interval 6–186 (GFRLRLAANA…FDAMSGRRIR (181 aa)).

It belongs to the SUA5 family. TsaC subfamily.

It localises to the cytoplasm. The enzyme catalyses L-threonine + hydrogencarbonate + ATP = L-threonylcarbamoyladenylate + diphosphate + H2O. Required for the formation of a threonylcarbamoyl group on adenosine at position 37 (t(6)A37) in tRNAs that read codons beginning with adenine. Catalyzes the conversion of L-threonine, HCO(3)(-)/CO(2) and ATP to give threonylcarbamoyl-AMP (TC-AMP) as the acyladenylate intermediate, with the release of diphosphate. The polypeptide is Threonylcarbamoyl-AMP synthase (Methylococcus capsulatus (strain ATCC 33009 / NCIMB 11132 / Bath)).